The following is a 193-amino-acid chain: Probable GTP-binding protein EngB (193 aa).

The EngB-type G domain occupies 22–193; it reads LLPEVALAGR…AAWEAIYRHL (172 aa). GTP-binding positions include 30-37, 57-61, 75-78, 142-145, and 174-176; these read GRSNVGKS, GKTQT, DVPG, TKLD, and FSS. The Mg(2+) site is built by Ser37 and Thr59.

It belongs to the TRAFAC class TrmE-Era-EngA-EngB-Septin-like GTPase superfamily. EngB GTPase family. Mg(2+) is required as a cofactor.

Functionally, necessary for normal cell division and for the maintenance of normal septation. The protein is Probable GTP-binding protein EngB of Exiguobacterium sibiricum (strain DSM 17290 / CCUG 55495 / CIP 109462 / JCM 13490 / 255-15).